We begin with the raw amino-acid sequence, 244 residues long: Ribonuclease 3 (244 aa).

An RNase III domain is found at aspartate 21–glycine 148. Glutamate 61 contributes to the Mg(2+) binding site. Aspartate 65 is an active-site residue. Residues aspartate 134 and glutamate 137 each coordinate Mg(2+). Glutamate 137 is a catalytic residue. One can recognise a DRBM domain in the interval aspartate 175–glutamate 242.

Belongs to the ribonuclease III family. In terms of assembly, homodimer. Mg(2+) serves as cofactor.

The protein localises to the cytoplasm. It carries out the reaction Endonucleolytic cleavage to 5'-phosphomonoester.. In terms of biological role, digests double-stranded RNA. Involved in the processing of primary rRNA transcript to yield the immediate precursors to the large and small rRNAs (23S and 16S). Processes some mRNAs, and tRNAs when they are encoded in the rRNA operon. Processes pre-crRNA and tracrRNA of type II CRISPR loci if present in the organism. This Corynebacterium jeikeium (strain K411) protein is Ribonuclease 3.